The primary structure comprises 123 residues: Small ribosomal subunit protein uS13 (123 aa).

Positions 95–123 are disordered; sequence GLPVRGQRTKTNARTRKGPARTVAGKKKK.

Belongs to the universal ribosomal protein uS13 family. Part of the 30S ribosomal subunit. Forms a loose heterodimer with protein S19. Forms two bridges to the 50S subunit in the 70S ribosome.

Its function is as follows. Located at the top of the head of the 30S subunit, it contacts several helices of the 16S rRNA. In the 70S ribosome it contacts the 23S rRNA (bridge B1a) and protein L5 of the 50S subunit (bridge B1b), connecting the 2 subunits; these bridges are implicated in subunit movement. Contacts the tRNAs in the A and P-sites. This chain is Small ribosomal subunit protein uS13, found in Heliobacterium modesticaldum (strain ATCC 51547 / Ice1).